The primary structure comprises 601 residues: Transcription factor ATEG_07666 (601 aa).

A DNA-binding region (zn(2)-C6 fungal-type) is located at residues 17–44 (CEECRRRKARCDRVRPKCGFCTENGMQC).

Its subcellular location is the nucleus. Its function is as follows. Specific transcriptional regulator for the azasperpyranone A biosynthesis cluster B. This is Transcription factor ATEG_07666 from Aspergillus terreus (strain NIH 2624 / FGSC A1156).